Consider the following 496-residue polypeptide: Glutamate--cysteine ligase B, chloroplastic (496 aa).

Residues 1-34 (MAVASRLAVARVAPDGGAAGRRRRRRGRPVVAVP) constitute a chloroplast transit peptide. The disordered stretch occupies residues 14-53 (PDGGAAGRRRRRRGRPVVAVPTAAGRGRGRGGAVAASPPT). Residues 29–38 (PVVAVPTAAG) show a composition bias toward low complexity. Cys-160 and Cys-380 are oxidised to a cystine.

The protein belongs to the carboxylate-amine ligase family. Glutamate--cysteine ligase type 2 subfamily. Homodimer or monomer when oxidized or reduced, respectively. The Cys-160-Cys-380 disulfide bridge is known to modulate the enzyme activity according to the redox status. The oxidized form constitutes the active enzyme.

The protein localises to the plastid. The protein resides in the chloroplast. The enzyme catalyses L-cysteine + L-glutamate + ATP = gamma-L-glutamyl-L-cysteine + ADP + phosphate + H(+). The protein operates within sulfur metabolism; glutathione biosynthesis; glutathione from L-cysteine and L-glutamate: step 1/2. The protein is Glutamate--cysteine ligase B, chloroplastic (GSH1-2) of Oryza sativa subsp. japonica (Rice).